Consider the following 546-residue polypeptide: MTIPHEVLAQGWIPFTVVVVLAILFSWFYIRYYQDHSQSEVSSTITGIIALFIALMTTALVPVDIFLVSYMKNDDGSWKPWSANRMNRDDIEETAVATTYYILYALLAFFVFVIIPFMYFFFEERDEDITTAERACGALKYSIGFLIVASVLLLVGAFAPLKQPPKNVTEWDKRLIFLKDELKSNNGETALSLLIGFLTLIGMLIMITYTAYGMTALPFSLLKGFKSAKTEQESVTRRRSRNQEQARLIKAQYMGGRAMSSRDRRRLSELEKEEHALATRERRLEAAQLGWLNKCLKLLRPFEMVFGAFFLLVALLIFVSLFITCLDKALHSNGYQYGYSLPTPQLPNPINIIMVYAQIVFPLDYCLFLLVVLYFVYSSMAGIRRVGIRCCWIKLFKVRPRRTLPQALLFMCVMLMLIVLSLNVMLFSLAPQYVMYGSQNYRANSTVTSLVNHTGIIQNVTTSHGIAKVCSMEMSSDHCTMTRIAVFLNRFFYKVWFFGACYYWGTWLFLVVFMTGLIYSIVRKRKTVVDEEYDSSDDSDEEMVTA.

The next 4 helical transmembrane spans lie at 8–28 (LAQGWIPFTVVVVLAILFSWF), 48–68 (IIALFIALMTTALVPVDIFLV), 102–122 (ILYALLAFFVFVIIPFMYFFF), and 141–161 (YSIGFLIVASVLLLVGAFAPL). The N-linked (GlcNAc...) asparagine glycan is linked to asparagine 167. The next 4 membrane-spanning stretches (helical) occupy residues 189–209 (TALSLLIGFLTLIGMLIMITY), 304–324 (MVFGAFFLLVALLIFVSLFIT), 352–372 (IIMVYAQIVFPLDYCLFLLVV), and 407–427 (ALLFMCVMLMLIVLSLNVMLF). 3 N-linked (GlcNAc...) asparagine glycosylation sites follow: asparagine 444, asparagine 452, and asparagine 459. A helical membrane pass occupies residues 495-515 (VWFFGACYYWGTWLFLVVFMT).

The protein belongs to the LIMR family. LMBRD1 subfamily.

Its subcellular location is the lysosome membrane. Its function is as follows. Probable lysosomal cobalamin transporter. Required to export cobalamin from lysosomes allowing its conversion to cofactors. The chain is Probable lysosomal cobalamin transporter from Nematostella vectensis (Starlet sea anemone).